The chain runs to 379 residues: Putative glutamate--cysteine ligase 2 (379 aa).

It belongs to the glutamate--cysteine ligase type 2 family. YbdK subfamily.

It catalyses the reaction L-cysteine + L-glutamate + ATP = gamma-L-glutamyl-L-cysteine + ADP + phosphate + H(+). In terms of biological role, ATP-dependent carboxylate-amine ligase which exhibits weak glutamate--cysteine ligase activity. This is Putative glutamate--cysteine ligase 2 from Roseiflexus sp. (strain RS-1).